We begin with the raw amino-acid sequence, 370 residues long: ECF RNA polymerase sigma factor SigG (370 aa).

Residues 63 to 129 (EPYRRELLAH…LTALEGRRRR (67 aa)) form a sigma-70 factor domain-2 region. Positions 85 to 88 (DLVQ) match the Polymerase core binding motif. The sigma-70 factor domain-4 stretch occupies residues 180–232 (LAFVAALQHLSPRQRAVLLLRDVLQWKSAEVADAIGTSTVAVNSLLQRARSQL). The segment at residues 207 to 226 (SAEVADAIGTSTVAVNSLLQ) is a DNA-binding region (H-T-H motif).

The protein belongs to the sigma-70 factor family. ECF subfamily. As to quaternary structure, interacts transiently with the RNA polymerase catalytic core formed by RpoA, RpoB, RpoC and RpoZ (2 alpha, 1 beta, 1 beta' and 1 omega subunit) to form the RNA polymerase holoenzyme that can initiate transcription.

Sigma factors are initiation factors that promote the attachment of RNA polymerase to specific initiation sites and are then released. Extracytoplasmic function (ECF) sigma factors are held in an inactive form by a cognate anti-sigma factor until released, although no anti-sigma factor is known for this protein. May be involved in host intracellular survival after infection (strains H37Rv and CDC 1551). A role in the SOS response is controversial; it has been seen in strain CDC 1551 but not in H37Rv. The sequence is that of ECF RNA polymerase sigma factor SigG (sigG) from Mycobacterium tuberculosis (strain CDC 1551 / Oshkosh).